A 2545-amino-acid chain; its full sequence is uncharacterized protein (2545 aa).

The helical transmembrane segment at 17 to 37 (INFSITFIFINILLVFFSTFL) threads the bilayer. Residues 131 to 161 (LENIKQELHIIDRELKNILQKEENLQLINEE) adopt a coiled-coil conformation. 3 disordered regions span residues 348-462 (NVNQ…PKKT), 587-616 (NHNM…SNDI), and 1214-1238 (RNSS…ENRR). 3 stretches are compositionally biased toward basic and acidic residues: residues 354 to 371 (SSDH…KNDQ), 380 to 391 (KNEKNEENEKNG), and 401 to 413 (QNGK…KNEQ). Positions 414–435 (NEQNDQIEQNYQNDPNDQNDQN) are enriched in low complexity. 2 stretches are compositionally biased toward basic and acidic residues: residues 437–454 (QNEK…KKNE) and 590–599 (MQRENTREDP). Residues 600–613 (SNNMDYTNKSTSDS) are compositionally biased toward polar residues. Residues 1219–1238 (NKKERDSKKDRDSVYDENRR) show a composition bias toward basic and acidic residues. Residues 2303-2337 (KEKYKFQMNMKDSEINQLQNNLIDEFKELNEVSKL) adopt a coiled-coil conformation.

Its subcellular location is the membrane. This is an uncharacterized protein from Plasmodium falciparum (isolate 3D7).